Here is a 132-residue protein sequence, read N- to C-terminus: Small ribosomal subunit protein uS8 (132 aa).

The protein belongs to the universal ribosomal protein uS8 family. In terms of assembly, part of the 30S ribosomal subunit. Contacts proteins S5 and S12.

In terms of biological role, one of the primary rRNA binding proteins, it binds directly to 16S rRNA central domain where it helps coordinate assembly of the platform of the 30S subunit. This is Small ribosomal subunit protein uS8 from Xanthomonas euvesicatoria pv. vesicatoria (strain 85-10) (Xanthomonas campestris pv. vesicatoria).